The following is a 236-amino-acid chain: Small ribosomal subunit protein eS6 (236 aa).

Residues Ser232 and Ser233 each carry the phosphoserine modification.

This sequence belongs to the eukaryotic ribosomal protein eS6 family. Phosphorylated.

The polypeptide is Small ribosomal subunit protein eS6 (RPS6) (Debaryomyces hansenii (strain ATCC 36239 / CBS 767 / BCRC 21394 / JCM 1990 / NBRC 0083 / IGC 2968) (Yeast)).